The following is a 290-amino-acid chain: Polyamine aminopropyltransferase (290 aa).

One can recognise a PABS domain in the interval 5–238 (QLWYEKLHSS…GIMTFAWASE (234 aa)). S-methyl-5'-thioadenosine is bound at residue glutamine 33. Spermidine contacts are provided by histidine 64 and aspartate 88. Residues glutamate 108 and 140 to 141 (DG) each bind S-methyl-5'-thioadenosine. Aspartate 158 functions as the Proton acceptor in the catalytic mechanism. Residue 158–161 (DSTD) participates in spermidine binding. Residue proline 165 coordinates S-methyl-5'-thioadenosine.

This sequence belongs to the spermidine/spermine synthase family. Homodimer or homotetramer.

It is found in the cytoplasm. The catalysed reaction is S-adenosyl 3-(methylsulfanyl)propylamine + putrescine = S-methyl-5'-thioadenosine + spermidine + H(+). It participates in amine and polyamine biosynthesis; spermidine biosynthesis; spermidine from putrescine: step 1/1. In terms of biological role, catalyzes the irreversible transfer of a propylamine group from the amino donor S-adenosylmethioninamine (decarboxy-AdoMet) to putrescine (1,4-diaminobutane) to yield spermidine. This is Polyamine aminopropyltransferase from Hamiltonella defensa subsp. Acyrthosiphon pisum (strain 5AT).